We begin with the raw amino-acid sequence, 415 residues long: Mitochondrial distribution and morphology protein 12 (415 aa).

The 402-residue stretch at 1-402 (MSFDINWSEL…WPSWVCFDLN (402 aa)) folds into the SMP-LTD domain. Positions 53–146 (EITIRHIGDP…PPLTDLRRSR (94 aa)) are disordered. 2 stretches are compositionally biased toward acidic residues: residues 62–75 (PFDD…DDDE) and 92–103 (NSSDDDEDDEYD).

It belongs to the MDM12 family. Component of the ER-mitochondria encounter structure (ERMES) or MDM complex, composed of MMM1, MDM10, MDM12 and MDM34. An MMM1 homodimer associates with one molecule of MDM12 on each side in a pairwise head-to-tail manner, and the SMP-LTD domains of MMM1 and MDM12 generate a continuous hydrophobic tunnel for phospholipid trafficking.

Its subcellular location is the mitochondrion outer membrane. It localises to the endoplasmic reticulum membrane. In terms of biological role, component of the ERMES/MDM complex, which serves as a molecular tether to connect the endoplasmic reticulum (ER) and mitochondria. Components of this complex are involved in the control of mitochondrial shape and protein biogenesis, and function in nonvesicular lipid trafficking between the ER and mitochondria. MDM12 is required for the interaction of the ER-resident membrane protein MMM1 and the outer mitochondrial membrane-resident beta-barrel protein MDM10. The MDM12-MMM1 subcomplex functions in the major beta-barrel assembly pathway that is responsible for biogenesis of all mitochondrial outer membrane beta-barrel proteins, and acts in a late step after the SAM complex. The MDM10-MDM12-MMM1 subcomplex further acts in the TOM40-specific pathway after the action of the MDM12-MMM1 complex. Essential for establishing and maintaining the structure of mitochondria and maintenance of mtDNA nucleoids. The sequence is that of Mitochondrial distribution and morphology protein 12 from Debaryomyces hansenii (strain ATCC 36239 / CBS 767 / BCRC 21394 / JCM 1990 / NBRC 0083 / IGC 2968) (Yeast).